Reading from the N-terminus, the 321-residue chain is Cytochrome c biogenesis protein CcsA (321 aa).

Transmembrane regions (helical) follow at residues 9–29 (ILTHISFSIISIVITIHLMTL), 44–64 (GIISTFFSITGLLITRWIYSG), 71–91 (LYESLIFLSWSFSIIHMIPYL), 98–118 (LSVITVPSVIFTQGFVTSCLS), 143–163 (MLLSYATLLCGSLLSVALLVI), 225–245 (IISLGFIFLTMGILSGAVWAN), 260–280 (WAFITWTIFAIYSHIRININF), and 288–308 (VASIGFLIIWICYFGINLLGI).

Belongs to the CcmF/CycK/Ccl1/NrfE/CcsA family. May interact with Ccs1.

It is found in the plastid. The protein localises to the chloroplast thylakoid membrane. Its function is as follows. Required during biogenesis of c-type cytochromes (cytochrome c6 and cytochrome f) at the step of heme attachment. In Dioscorea elephantipes (Elephant's foot yam), this protein is Cytochrome c biogenesis protein CcsA.